Reading from the N-terminus, the 149-residue chain is Large ribosomal subunit protein uL15 (149 aa).

The segment at 21-54 (RGSASGLGCTSGKGNKGQNARSGGGVRPGFEGGQ) is disordered. 2 stretches are compositionally biased toward gly residues: residues 23–35 (SASG…GKGN) and 42–52 (SGGGVRPGFEG).

This sequence belongs to the universal ribosomal protein uL15 family. As to quaternary structure, part of the 50S ribosomal subunit.

Functionally, binds to the 23S rRNA. This chain is Large ribosomal subunit protein uL15, found in Lawsonia intracellularis (strain PHE/MN1-00).